The sequence spans 382 residues: Heme A synthase (382 aa).

8 helical membrane-spanning segments follow: residues 25 to 45, 112 to 132, 138 to 158, 176 to 196, 211 to 231, 270 to 290, 303 to 323, and 327 to 347; these read GAVR…VAVG, LLGR…WARG, LLLG…IGWI, LALH…LAAG, VVAG…GLVA, LALV…VAIA, AAAG…GLGI, and LLHV…AVLI. H277 lines the heme pocket. H338 serves as a coordination point for heme.

This sequence belongs to the COX15/CtaA family. Type 2 subfamily. Interacts with CtaB. Requires heme b as cofactor.

The protein resides in the cell membrane. The catalysed reaction is Fe(II)-heme o + 2 A + H2O = Fe(II)-heme a + 2 AH2. Its pathway is porphyrin-containing compound metabolism; heme A biosynthesis; heme A from heme O: step 1/1. Functionally, catalyzes the conversion of heme O to heme A by two successive hydroxylations of the methyl group at C8. The first hydroxylation forms heme I, the second hydroxylation results in an unstable dihydroxymethyl group, which spontaneously dehydrates, resulting in the formyl group of heme A. The sequence is that of Heme A synthase from Methylorubrum extorquens (strain PA1) (Methylobacterium extorquens).